The sequence spans 338 residues: Pyridoxal 5'-phosphate synthase subunit PdxS (338 aa).

Asp66 contributes to the D-ribose 5-phosphate binding site. Lys123 (schiff-base intermediate with D-ribose 5-phosphate) is an active-site residue. Residue Gly195 coordinates D-ribose 5-phosphate. Lys207 contributes to the D-glyceraldehyde 3-phosphate binding site. Residues Gly256 and 277–278 (GS) each bind D-ribose 5-phosphate.

It belongs to the PdxS/SNZ family. In the presence of PdxT, forms a dodecamer of heterodimers.

The catalysed reaction is aldehydo-D-ribose 5-phosphate + D-glyceraldehyde 3-phosphate + L-glutamine = pyridoxal 5'-phosphate + L-glutamate + phosphate + 3 H2O + H(+). Its pathway is cofactor biosynthesis; pyridoxal 5'-phosphate biosynthesis. In terms of biological role, catalyzes the formation of pyridoxal 5'-phosphate from ribose 5-phosphate (RBP), glyceraldehyde 3-phosphate (G3P) and ammonia. The ammonia is provided by the PdxT subunit. Can also use ribulose 5-phosphate and dihydroxyacetone phosphate as substrates, resulting from enzyme-catalyzed isomerization of RBP and G3P, respectively. The chain is Pyridoxal 5'-phosphate synthase subunit PdxS from Saccharolobus islandicus (strain Y.N.15.51 / Yellowstone #2) (Sulfolobus islandicus).